A 187-amino-acid polypeptide reads, in one-letter code: Protein GrpE (187 aa).

Residues Met1 to Asp26 form a disordered region.

It belongs to the GrpE family. As to quaternary structure, homodimer.

It localises to the cytoplasm. Functionally, participates actively in the response to hyperosmotic and heat shock by preventing the aggregation of stress-denatured proteins, in association with DnaK and GrpE. It is the nucleotide exchange factor for DnaK and may function as a thermosensor. Unfolded proteins bind initially to DnaJ; upon interaction with the DnaJ-bound protein, DnaK hydrolyzes its bound ATP, resulting in the formation of a stable complex. GrpE releases ADP from DnaK; ATP binding to DnaK triggers the release of the substrate protein, thus completing the reaction cycle. Several rounds of ATP-dependent interactions between DnaJ, DnaK and GrpE are required for fully efficient folding. This Methylocella silvestris (strain DSM 15510 / CIP 108128 / LMG 27833 / NCIMB 13906 / BL2) protein is Protein GrpE.